A 406-amino-acid polypeptide reads, in one-letter code: Uronyl 2-sulfotransferase (406 aa).

Over 1 to 49 the chain is Cytoplasmic; the sequence is MKKKQQHPGGGADPWPHGAPMGGAPPGLGSWKRRVPLLPFLRFSLRDYG. The chain crosses the membrane as a helical; Signal-anchor for type II membrane protein span at residues 50–70; the sequence is FCMATLLVFCLGSLLYQLSGG. At 71 to 406 the chain is on the lumenal side; sequence PPRFLLDLRQ…EKWLEDIYKR (336 aa). 3 N-linked (GlcNAc...) asparagine glycosylation sites follow: Asn-84, Asn-140, and Asn-155. Residue His-168 is part of the active site. N-linked (GlcNAc...) asparagine glycans are attached at residues Asn-173 and Asn-319. Residues 387-399 show a composition bias toward acidic residues; it reads EPIDDEEQDDEKW. The disordered stretch occupies residues 387-406; it reads EPIDDEEQDDEKWLEDIYKR.

This sequence belongs to the sulfotransferase 3 family. In terms of tissue distribution, widely expressed.

It localises to the golgi apparatus membrane. Sulfotransferase that catalyzes the transfer of sulfate to the position 2 of uronyl residues in glycosaminoglycan chains. Has mainly activity toward iduronyl residues in dermatan sulfate, and weaker activity toward glucuronyl residues of chondroitin sulfate. Has little to no activity toward desulfated N-resulfated heparin or N-sulfoheparosan. This chain is Uronyl 2-sulfotransferase, found in Homo sapiens (Human).